Consider the following 227-residue polypeptide: Cytochrome c oxidase subunit 2 (227 aa).

The Mitochondrial intermembrane segment spans residues 1–14 (MAYPFQLGLQDATS). The helical transmembrane segment at 15–45 (PIMEELLHFHDHTLMIVFLISSLILYIISLM) threads the bilayer. Topologically, residues 46–59 (LTTKLTHTSTMDAQ) are mitochondrial matrix. A helical transmembrane segment spans residues 60 to 87 (EVETVWTILPAIILILIALPSLRILYMM). At 88–227 (DEINNPSLTV…YFETWSALMV (140 aa)) the chain is on the mitochondrial intermembrane side. His-161, Cys-196, Glu-198, Cys-200, His-204, and Met-207 together coordinate Cu cation. Glu-198 lines the Mg(2+) pocket. Tyr-218 carries the phosphotyrosine modification.

The protein belongs to the cytochrome c oxidase subunit 2 family. Component of the cytochrome c oxidase (complex IV, CIV), a multisubunit enzyme composed of 14 subunits. The complex is composed of a catalytic core of 3 subunits MT-CO1, MT-CO2 and MT-CO3, encoded in the mitochondrial DNA, and 11 supernumerary subunits COX4I, COX5A, COX5B, COX6A, COX6B, COX6C, COX7A, COX7B, COX7C, COX8 and NDUFA4, which are encoded in the nuclear genome. The complex exists as a monomer or a dimer and forms supercomplexes (SCs) in the inner mitochondrial membrane with NADH-ubiquinone oxidoreductase (complex I, CI) and ubiquinol-cytochrome c oxidoreductase (cytochrome b-c1 complex, complex III, CIII), resulting in different assemblies (supercomplex SCI(1)III(2)IV(1) and megacomplex MCI(2)III(2)IV(2)). Found in a complex with TMEM177, COA6, COX18, COX20, SCO1 and SCO2. Interacts with TMEM177 in a COX20-dependent manner. Interacts with COX20. Interacts with COX16. The cofactor is Cu cation.

It localises to the mitochondrion inner membrane. The enzyme catalyses 4 Fe(II)-[cytochrome c] + O2 + 8 H(+)(in) = 4 Fe(III)-[cytochrome c] + 2 H2O + 4 H(+)(out). In terms of biological role, component of the cytochrome c oxidase, the last enzyme in the mitochondrial electron transport chain which drives oxidative phosphorylation. The respiratory chain contains 3 multisubunit complexes succinate dehydrogenase (complex II, CII), ubiquinol-cytochrome c oxidoreductase (cytochrome b-c1 complex, complex III, CIII) and cytochrome c oxidase (complex IV, CIV), that cooperate to transfer electrons derived from NADH and succinate to molecular oxygen, creating an electrochemical gradient over the inner membrane that drives transmembrane transport and the ATP synthase. Cytochrome c oxidase is the component of the respiratory chain that catalyzes the reduction of oxygen to water. Electrons originating from reduced cytochrome c in the intermembrane space (IMS) are transferred via the dinuclear copper A center (CU(A)) of subunit 2 and heme A of subunit 1 to the active site in subunit 1, a binuclear center (BNC) formed by heme A3 and copper B (CU(B)). The BNC reduces molecular oxygen to 2 water molecules using 4 electrons from cytochrome c in the IMS and 4 protons from the mitochondrial matrix. This Canis simensis (Ethiopian wolf) protein is Cytochrome c oxidase subunit 2 (MT-CO2).